Reading from the N-terminus, the 337-residue chain is Ketol-acid reductoisomerase (NADP(+)) (337 aa).

The region spanning 3-183 (LEMFYDDDAD…GGTRAGVIKT (181 aa)) is the KARI N-terminal Rossmann domain. Residues 26–29 (YGSQ), Lys-49, Ser-52, Ser-54, and 84–87 (DTAQ) contribute to the NADP(+) site. The active site involves His-109. Position 135 (Gly-135) interacts with NADP(+). Residues 184–329 (TFKDETETDL…KKLRDLMSWV (146 aa)) enclose the KARI C-terminal knotted domain. Asp-192, Glu-196, Glu-228, and Glu-232 together coordinate Mg(2+). Ser-253 is a binding site for substrate.

It belongs to the ketol-acid reductoisomerase family. It depends on Mg(2+) as a cofactor.

It carries out the reaction (2R)-2,3-dihydroxy-3-methylbutanoate + NADP(+) = (2S)-2-acetolactate + NADPH + H(+). It catalyses the reaction (2R,3R)-2,3-dihydroxy-3-methylpentanoate + NADP(+) = (S)-2-ethyl-2-hydroxy-3-oxobutanoate + NADPH + H(+). It functions in the pathway amino-acid biosynthesis; L-isoleucine biosynthesis; L-isoleucine from 2-oxobutanoate: step 2/4. Its pathway is amino-acid biosynthesis; L-valine biosynthesis; L-valine from pyruvate: step 2/4. Its function is as follows. Involved in the biosynthesis of branched-chain amino acids (BCAA). Catalyzes an alkyl-migration followed by a ketol-acid reduction of (S)-2-acetolactate (S2AL) to yield (R)-2,3-dihydroxy-isovalerate. In the isomerase reaction, S2AL is rearranged via a Mg-dependent methyl migration to produce 3-hydroxy-3-methyl-2-ketobutyrate (HMKB). In the reductase reaction, this 2-ketoacid undergoes a metal-dependent reduction by NADPH to yield (R)-2,3-dihydroxy-isovalerate. The protein is Ketol-acid reductoisomerase (NADP(+)) of Mycobacterium bovis (strain BCG / Pasteur 1173P2).